The primary structure comprises 72 residues: Putative membrane protein insertion efficiency factor (72 aa).

The protein belongs to the UPF0161 family.

It localises to the cell inner membrane. Its function is as follows. Could be involved in insertion of integral membrane proteins into the membrane. This is Putative membrane protein insertion efficiency factor from Trichodesmium erythraeum (strain IMS101).